Consider the following 122-residue polypeptide: Chorismate mutase AroH (122 aa).

Residues 2-120 form the Chorismate mutase aroH-type domain; it reads VRGIRGAITV…AVRLRPDLES (119 aa). Residues Arg-6, Arg-89, and Tyr-107 each contribute to the prephenate site.

In terms of assembly, homotrimer.

The protein localises to the cytoplasm. The catalysed reaction is chorismate = prephenate. Its pathway is metabolic intermediate biosynthesis; prephenate biosynthesis; prephenate from chorismate: step 1/1. Its activity is regulated as follows. Inhibited by 40% with 500 uM tyrosine, and a tyrosine concentration as high as 5 mM reduced activity to 5%. Functionally, catalyzes the Claisen rearrangement of chorismate to prephenate. Probably involved in the aromatic amino acid biosynthesis. This is Chorismate mutase AroH from Thermus thermophilus.